A 346-amino-acid chain; its full sequence is D-alanine--D-alanine ligase A (346 aa).

The ATP-grasp domain occupies 138-332; the sequence is KRLFLAAGVE…FAELCERICR (195 aa). 164-217 is a binding site for ATP; it reads QLGFPLVVKPNSQGSTVGLSIVHSQAELQPAIELAGRYGDEVMLERFVAGREVT. Mg(2+)-binding residues include Asp-286, Glu-299, and Asn-301.

It belongs to the D-alanine--D-alanine ligase family. Requires Mg(2+) as cofactor. The cofactor is Mn(2+).

It is found in the cytoplasm. The catalysed reaction is 2 D-alanine + ATP = D-alanyl-D-alanine + ADP + phosphate + H(+). It functions in the pathway cell wall biogenesis; peptidoglycan biosynthesis. Its function is as follows. Cell wall formation. The protein is D-alanine--D-alanine ligase A of Pseudomonas aeruginosa (strain ATCC 15692 / DSM 22644 / CIP 104116 / JCM 14847 / LMG 12228 / 1C / PRS 101 / PAO1).